We begin with the raw amino-acid sequence, 320 residues long: G-protein coupled receptor homolog FPV021 (320 aa).

Residues 1–18 (MDTDYGTVHTQQSVKGNT) lie on the Extracellular side of the membrane. Residues 19–39 (LILLIYFISFIVGFPGNCTVI) traverse the membrane as a helical segment. At 40–52 (WFTGYRWKKSVTT) the chain is on the cytoplasmic side. A helical transmembrane segment spans residues 53-73 (IWFLNLAIADTLFVIFIPFEI). The Extracellular segment spans residues 74 to 91 (TYILMGHYWPFGLFVCRI). Cys-89 and Cys-167 form a disulfide bridge. The chain crosses the membrane as a helical span at residues 92–112 (GSLMFNTGMYASIFFLTFISI). The Cytoplasmic segment spans residues 113-133 (DRYCLAFRRDICNKYRYRINI). A helical transmembrane segment spans residues 134–154 (MVMIIISWIISILLSTPYMYF). Over 155-188 (KNTNEKYRNNRDCLEDYHSDNNTYLLRRVVFCIS) the chain is Extracellular. Asn-175 carries an N-linked (GlcNAc...) asparagine; by host glycan. The helical transmembrane segment at 189–209 (LVMRYLVPSVVMLFCYCLLLF) threads the bilayer. Residues 210 to 222 (KHSLFLSKGQTYT) are Cytoplasmic-facing. A helical membrane pass occupies residues 223 to 243 (IVIMITSFMVLWTPYNILYFI). At 244 to 260 (DVIGSHYYNADTIIDAA) the chain is on the extracellular side. Residues 261-281 (PISISLIFLSSSINPMIYMLV) form a helical membrane-spanning segment. Residues 282–320 (GRYVSFENYSMRESLKLILSEERDNQTNHENEIKMENIN) are Cytoplasmic-facing.

Belongs to the G-protein coupled receptor 1 family.

The protein resides in the host cell membrane. The chain is G-protein coupled receptor homolog FPV021 from Vertebrata (FPV).